Consider the following 594-residue polypeptide: P-granule-associated novel protein 1 (594 aa).

Positions 1–18 (MRSLLSFVLLALARIAIS) are cleaved as a signal peptide. Over 19-513 (EETKSCIDIE…PEEEEVYRSG (495 aa)) the chain is Extracellular. LRR repeat units lie at residues 78–101 (GTEL…LFEN), 103–124 (FAKQ…SFQS), 125–149 (LGGS…LFTG), 150–173 (LKSL…AFEE), 175–197 (KKVE…TFDG), 198–221 (MKNL…AFRG), 222–245 (LNSL…IFSA), 246–269 (LKNL…SFPK), 271–290 (EKLV…KLKD), 291–315 (LPSL…MFGL), 318–341 (SDRI…AFQH), 343–365 (PNLI…SPSQ), 374–397 (LKKL…ELPK), 399–419 (LSSL…ALEG), and 420–442 (MEIK…TFDS). Residues 514–534 (WITVAATILTIVTIVIMVIIA) form a helical membrane-spanning segment. The Cytoplasmic portion of the chain corresponds to 535–594 (MLYFKDARYQFPLRGRRSDSDLHKLIENDPLNIASDSILVVPAMPKRNTGPKKTVRFQNF).

As to quaternary structure, interacts with glh-1. Interacts (via LRR regions) with myrf-1 (via C-terminus); the interaction promotes the role of myrf-1 in the synaptic remodeling of DD GABAergic motor neurons at the cell membrane. As to expression, expressed in the germline and somatic cells. In terms of tissue distribution, expressed in the germline and somatic cells. Expressed at higher levels in germline cells relative to somatic cells. Expressed in germline cells. As to expression, highly expressed in the pharynx and at lower levels in the intestine, but not detected in other tissues. Other studies suggest a broader expression pattern in somatic tissues: from embryogenesis to adult stages, expressed strongly in body wall muscle, vulva, somatic gonad and pharynx, at lower levels in the nerve ring, hypodermis, and rectal epithelia, and very weakly in the intestine.

It localises to the cytoplasm. The protein localises to the apical cell membrane. Regulates diverse developmental processes including larval molting and gonad maturation. Its function is as follows. Promotes the localization of myrf-1 and myrf-2 to the cell membrane. In association with myrf-1, promotes the synaptic remodeling of DD GABAergic motor neurons whereby new synapses form in the dorsal processes of DD neurons. The protein is P-granule-associated novel protein 1 of Caenorhabditis elegans.